The primary structure comprises 359 residues: Type-1 angiotensin II receptor (359 aa).

Residues 1–25 (MVPNYSTEETVKRIHVDCPVSGRHS) lie on the Extracellular side of the membrane. An N-linked (GlcNAc...) asparagine glycan is attached at N4. D17 contributes to the angiotensin II binding site. Disulfide bonds link C18–C274 and C101–C180. A helical transmembrane segment spans residues 26–55 (YIYIMVPTVYSIIFIIGIFGNSLVVIVIYC). Residues 56-61 (YMKLKT) are Cytoplasmic-facing. Residues 62 to 89 (VASIFLLNLALADLCFLITLPLWAAYTA) form a helical membrane-spanning segment. Over 90–98 (MEYQWPFGN) the chain is Extracellular. Residues 99 to 125 (CLCKLASAGISFNLYASVFLLTCLSID) form a helical membrane-spanning segment. Residues 126–141 (RYLAIVHPVKSRIRRT) lie on the Cytoplasmic side of the membrane. The chain crosses the membrane as a helical span at residues 142–165 (MFVARVTCIVIWLLAGVASLPVII). Over 166 to 190 (HRNIFFAENLNMTVCGFRYDNNNTT) the chain is Extracellular. R167 lines the angiotensin II pocket. N176 is a glycosylation site (N-linked (GlcNAc...) asparagine). Angiotensin II contacts are provided by F182 and Y184. Residues N187 and N188 are each glycosylated (N-linked (GlcNAc...) asparagine). The chain crosses the membrane as a helical span at residues 191–216 (LRVGLGLSKNLLGFLIPFLIILTSYT). K199 is an angiotensin II binding site. The Cytoplasmic portion of the chain corresponds to 217–239 (LIWKTLKKAYQIQRNKTRNDDIF). Residues 240–268 (KMIVAIVFFFFFSWIPHQVFTFLDVLIQL) form a helical membrane-spanning segment. Topologically, residues 269-278 (HVITDCKITD) are extracellular. A helical transmembrane segment spans residues 279-304 (IVDTAMPFTICIAYFNNCLNPFFYVF). Residues 305–359 (FGKNFKKYFLQLIKYIPPNVSTHPSLTTKMSSLSYRPPENIRLPTKKTAGSFDTE) are Cytoplasmic-facing.

It belongs to the G-protein coupled receptor 1 family. C-terminal Ser or Thr residues may be phosphorylated. In terms of tissue distribution, adrenal medulla.

The protein resides in the cell membrane. Its function is as follows. Receptor for angiotensin II, a vasoconstricting peptide, which acts as a key regulator of blood pressure and sodium retention by the kidney. The activated receptor in turn couples to G-alpha proteins G(q) (GNAQ, GNA11, GNA14 or GNA15) and thus activates phospholipase C and increases the cytosolic Ca(2+) concentrations, which in turn triggers cellular responses such as stimulation of protein kinase C. In Meleagris gallopavo (Wild turkey), this protein is Type-1 angiotensin II receptor (AGTR1).